The sequence spans 352 residues: 26S proteasome regulatory subunit rpn-8 (352 aa).

Residues 16-152 (VSVAPLVLLS…TDAYFAVDEI (137 aa)) form the MPN domain. Residues 303 to 352 (NRQQQEENDAKKKEGENGEKKEGADKKEGSPAAANGESKEKENSPKEKKK) are disordered. Basic and acidic residues-rich tracts occupy residues 306–331 (QQEENDAKKKEGENGEKKEGADKKEG) and 339–352 (ESKEKENSPKEKKK).

Belongs to the peptidase M67A family.

Functionally, acts as a regulatory subunit of the 26S proteasome which is involved in the ATP-dependent degradation of ubiquitinated proteins. The sequence is that of 26S proteasome regulatory subunit rpn-8 (rpn-8) from Neurospora crassa (strain ATCC 24698 / 74-OR23-1A / CBS 708.71 / DSM 1257 / FGSC 987).